Consider the following 251-residue polypeptide: DNA repair protein RecO (251 aa).

It belongs to the RecO family.

In terms of biological role, involved in DNA repair and RecF pathway recombination. This chain is DNA repair protein RecO, found in Albidiferax ferrireducens (strain ATCC BAA-621 / DSM 15236 / T118) (Rhodoferax ferrireducens).